An 861-amino-acid polypeptide reads, in one-letter code: Ribosome biogenesis protein BOP1 homolog (861 aa).

Residues 1-237 (MVANKSKATK…GDTSDEEDIR (237 aa)) form a disordered region. Residues 29–45 (NGRSTKQPEADSDQSAS) show a composition bias toward polar residues. Acidic residues-rich tracts occupy residues 62 to 77 (DDGD…DASD) and 87 to 143 (SDSD…EDLA). Composition is skewed to basic and acidic residues over residues 144–156 (EPEK…EGSK), 174–190 (ETKK…EKLA), and 212–223 (PERKTGRLKNSD). 6 WD repeats span residues 522–561 (GHTD…CIKT), 563–603 (PTGD…CLLS), 692–730 (KSKG…LLKK), 733–772 (PSCK…RPYQ), 776–815 (LHFS…DLMQ), and 831–861 (VNDF…RLYT).

This sequence belongs to the WD repeat BOP1/ERB1 family.

The protein localises to the nucleus. It is found in the nucleolus. It localises to the nucleoplasm. Its function is as follows. Required for maturation of ribosomal RNAs and formation of the large ribosomal subunit. In Culex quinquefasciatus (Southern house mosquito), this protein is Ribosome biogenesis protein BOP1 homolog.